The following is a 286-amino-acid chain: Bifunctional protein FolD (286 aa).

NADP(+)-binding positions include 167-169 (GRS) and isoleucine 233.

Belongs to the tetrahydrofolate dehydrogenase/cyclohydrolase family. Homodimer.

The enzyme catalyses (6R)-5,10-methylene-5,6,7,8-tetrahydrofolate + NADP(+) = (6R)-5,10-methenyltetrahydrofolate + NADPH. The catalysed reaction is (6R)-5,10-methenyltetrahydrofolate + H2O = (6R)-10-formyltetrahydrofolate + H(+). The protein operates within one-carbon metabolism; tetrahydrofolate interconversion. Its function is as follows. Catalyzes the oxidation of 5,10-methylenetetrahydrofolate to 5,10-methenyltetrahydrofolate and then the hydrolysis of 5,10-methenyltetrahydrofolate to 10-formyltetrahydrofolate. This chain is Bifunctional protein FolD, found in Limosilactobacillus reuteri (strain DSM 20016) (Lactobacillus reuteri).